The following is a 186-amino-acid chain: Ribosome-recycling factor (186 aa).

It belongs to the RRF family.

The protein resides in the cytoplasm. Responsible for the release of ribosomes from messenger RNA at the termination of protein biosynthesis. May increase the efficiency of translation by recycling ribosomes from one round of translation to another. The polypeptide is Ribosome-recycling factor (Bartonella henselae (strain ATCC 49882 / DSM 28221 / CCUG 30454 / Houston 1) (Rochalimaea henselae)).